Here is a 488-residue protein sequence, read N- to C-terminus: Ribulose bisphosphate carboxylase large chain (488 aa).

2 residues coordinate substrate: N127 and T177. The active-site Proton acceptor is K179. K181 is a binding site for substrate. 3 residues coordinate Mg(2+): K205, D207, and E208. K205 carries the N6-carboxylysine modification. H297 serves as the catalytic Proton acceptor. Substrate-binding residues include R298, H330, and S382.

This sequence belongs to the RuBisCO large chain family. Type I subfamily. As to quaternary structure, heterohexadecamer of 8 large chains and 8 small chains. It depends on Mg(2+) as a cofactor.

It is found in the plastid. The protein localises to the chloroplast. The catalysed reaction is 2 (2R)-3-phosphoglycerate + 2 H(+) = D-ribulose 1,5-bisphosphate + CO2 + H2O. It carries out the reaction D-ribulose 1,5-bisphosphate + O2 = 2-phosphoglycolate + (2R)-3-phosphoglycerate + 2 H(+). Its function is as follows. RuBisCO catalyzes two reactions: the carboxylation of D-ribulose 1,5-bisphosphate, the primary event in carbon dioxide fixation, as well as the oxidative fragmentation of the pentose substrate in the photorespiration process. Both reactions occur simultaneously and in competition at the same active site. The polypeptide is Ribulose bisphosphate carboxylase large chain (rbcL) (Porphyra umbilicalis (Purple laver)).